We begin with the raw amino-acid sequence, 366 residues long: Reticulon-4-interacting protein 1, mitochondrial (366 aa).

The N-terminal 20 residues, 1–20, are a transit peptide targeting the mitochondrion; it reads MIEKMILRRFFSTKSSTMRA.

The protein belongs to the zinc-containing alcohol dehydrogenase family. Quinone oxidoreductase subfamily. Expressed in pharynx, muscles and intestine.

The protein resides in the mitochondrion. Functionally, plays a role in oxygen metabolism in the mitochondria by regulating the levels of reactive oxygen species (ROS) thereby conferring resistance to oxidative stress. Involved in resistance to P.aeruginosa PA14 infection. Regulates lifespan. This chain is Reticulon-4-interacting protein 1, mitochondrial, found in Caenorhabditis elegans.